Reading from the N-terminus, the 1216-residue chain is ATP-dependent helicase/nuclease subunit A (1216 aa).

Residues 26–488 enclose the UvrD-like helicase ATP-binding domain; it reads QKKTAEQIEA…ILLKENFRSS (463 aa). Residue 47–54 coordinates ATP; that stretch reads ASAGSGKT. The UvrD-like helicase C-terminal domain occupies 515-802; it reads KHQLVFANTK…ELMTIHKSKG (288 aa).

The protein belongs to the helicase family. AddA subfamily. As to quaternary structure, heterodimer of AddA and AddB/RexB. Mg(2+) serves as cofactor.

It carries out the reaction Couples ATP hydrolysis with the unwinding of duplex DNA by translocating in the 3'-5' direction.. It catalyses the reaction ATP + H2O = ADP + phosphate + H(+). The heterodimer acts as both an ATP-dependent DNA helicase and an ATP-dependent, dual-direction single-stranded exonuclease. Recognizes the chi site generating a DNA molecule suitable for the initiation of homologous recombination. The AddA nuclease domain is required for chi fragment generation; this subunit has the helicase and 3' -&gt; 5' nuclease activities. In Streptococcus pneumoniae (strain CGSP14), this protein is ATP-dependent helicase/nuclease subunit A.